The sequence spans 98 residues: NADH-ubiquinone oxidoreductase chain 4L (98 aa).

3 helical membrane-spanning segments follow: residues 2–22, 29–49, and 61–81; these read PSIS…MLIF, SLLC…LTIL, and ILLL…LVTV.

It belongs to the complex I subunit 4L family. As to quaternary structure, core subunit of respiratory chain NADH dehydrogenase (Complex I) which is composed of 45 different subunits.

It localises to the mitochondrion inner membrane. The enzyme catalyses a ubiquinone + NADH + 5 H(+)(in) = a ubiquinol + NAD(+) + 4 H(+)(out). Functionally, core subunit of the mitochondrial membrane respiratory chain NADH dehydrogenase (Complex I) which catalyzes electron transfer from NADH through the respiratory chain, using ubiquinone as an electron acceptor. Part of the enzyme membrane arm which is embedded in the lipid bilayer and involved in proton translocation. In Eulemur coronatus (Crowned lemur), this protein is NADH-ubiquinone oxidoreductase chain 4L (MT-ND4L).